A 937-amino-acid polypeptide reads, in one-letter code: Inactive tyrosine-protein kinase transmembrane receptor ROR1 (937 aa).

The first 29 residues, 1–29 (MHRPRRRGTRPPLLALLAALLLAARGAAA), serve as a signal peptide directing secretion. The Extracellular segment spans residues 30-406 (QETELSVSAE…KEKNKMEILY (377 aa)). In terms of domain architecture, Ig-like C2-type spans 42-147 (PTSSWNISSE…EVVSSTGVLF (106 aa)). 2 N-linked (GlcNAc...) asparagine glycosylation sites follow: asparagine 47 and asparagine 66. 9 cysteine pairs are disulfide-bonded: cysteine 79–cysteine 131, cysteine 170–cysteine 235, cysteine 178–cysteine 228, cysteine 219–cysteine 260, cysteine 248–cysteine 296, cysteine 252–cysteine 282, cysteine 313–cysteine 391, cysteine 334–cysteine 374, and cysteine 362–cysteine 386. Residues 165 to 299 (EEDGFCQPYR…SPEAANCIRI (135 aa)) form the FZ domain. N-linked (GlcNAc...) asparagine glycosylation is present at asparagine 184. The Kringle domain maps to 312-391 (KCYNSTGVDY…KSDLCDIPAC (80 aa)). The N-linked (GlcNAc...) asparagine glycan is linked to asparagine 315. A helical membrane pass occupies residues 407–427 (ILVPSVAIPLAIALLFFFICV). Residues 428-937 (CRNNQKSSSA…HTESMISAEL (510 aa)) are Cytoplasmic-facing. The Protein kinase domain maps to 473–746 (VRFMEELGEC…PRFKDIHVRL (274 aa)). ATP is bound by residues 479-487 (LGECAFGKI) and lysine 506. Tyrosine 645 bears the Phosphotyrosine; by autocatalysis mark. Positions 753–762 (SSHTSSTTPS) are enriched in low complexity. Disordered regions lie at residues 753-779 (SSHT…SPVS) and 833-890 (AAHY…HMSI). The segment covering 763–779 (GGNATTQTTSLSASPVS) has biased composition (polar residues). Over residues 854-864 (RSPSSASGSTS) the composition is skewed to low complexity. Residues 865-880 (TGHVTSLPSSGSNQEA) are compositionally biased toward polar residues.

Belongs to the protein kinase superfamily. Tyr protein kinase family. ROR subfamily. As to quaternary structure, interacts with ERBB2 and IGFBP5. In terms of tissue distribution, expressed strongly in human heart, lung and kidney, but weakly in the CNS. Isoform Short is strongly expressed in fetal and adult CNS and in a variety of human cancers, including those originating from CNS or PNS neuroectoderm.

It is found in the membrane. The protein localises to the cell projection. Its subcellular location is the axon. Has very low kinase activity in vitro and is unlikely to function as a tyrosine kinase in vivo. Receptor for ligand WNT5A which activate downstream NFkB signaling pathway and may result in the inhibition of WNT3A-mediated signaling. In inner ear, crucial for spiral ganglion neurons to innervate auditory hair cells. Via IGFBP5 ligand, forms a complex with ERBB2 to enhance CREB oncogenic signaling. The chain is Inactive tyrosine-protein kinase transmembrane receptor ROR1 (ROR1) from Homo sapiens (Human).